A 332-amino-acid polypeptide reads, in one-letter code: Holliday junction branch migration complex subunit RuvB (332 aa).

The tract at residues 1 to 181 (MTRFLDSDAM…FGITGHMEYY (181 aa)) is large ATPase domain (RuvB-L). Residues Leu-20, Arg-21, Gly-62, Lys-65, Thr-66, Thr-67, 128–130 (EDF), Arg-171, Tyr-181, and Arg-218 each bind ATP. Thr-66 contributes to the Mg(2+) binding site. Residues 182–252 (EENDLTEIIE…ITDKALTMLD (71 aa)) are small ATPAse domain (RuvB-S). Residues 255–332 (HEGLDYVDQK…EHLGYQRFDK (78 aa)) form a head domain (RuvB-H) region. The DNA site is built by Arg-291, Arg-310, Arg-312, and Arg-315.

It belongs to the RuvB family. As to quaternary structure, homohexamer. Forms an RuvA(8)-RuvB(12)-Holliday junction (HJ) complex. HJ DNA is sandwiched between 2 RuvA tetramers; dsDNA enters through RuvA and exits via RuvB. An RuvB hexamer assembles on each DNA strand where it exits the tetramer. Each RuvB hexamer is contacted by two RuvA subunits (via domain III) on 2 adjacent RuvB subunits; this complex drives branch migration. In the full resolvosome a probable DNA-RuvA(4)-RuvB(12)-RuvC(2) complex forms which resolves the HJ.

The protein resides in the cytoplasm. The enzyme catalyses ATP + H2O = ADP + phosphate + H(+). In terms of biological role, the RuvA-RuvB-RuvC complex processes Holliday junction (HJ) DNA during genetic recombination and DNA repair, while the RuvA-RuvB complex plays an important role in the rescue of blocked DNA replication forks via replication fork reversal (RFR). RuvA specifically binds to HJ cruciform DNA, conferring on it an open structure. The RuvB hexamer acts as an ATP-dependent pump, pulling dsDNA into and through the RuvAB complex. RuvB forms 2 homohexamers on either side of HJ DNA bound by 1 or 2 RuvA tetramers; 4 subunits per hexamer contact DNA at a time. Coordinated motions by a converter formed by DNA-disengaged RuvB subunits stimulates ATP hydrolysis and nucleotide exchange. Immobilization of the converter enables RuvB to convert the ATP-contained energy into a lever motion, pulling 2 nucleotides of DNA out of the RuvA tetramer per ATP hydrolyzed, thus driving DNA branch migration. The RuvB motors rotate together with the DNA substrate, which together with the progressing nucleotide cycle form the mechanistic basis for DNA recombination by continuous HJ branch migration. Branch migration allows RuvC to scan DNA until it finds its consensus sequence, where it cleaves and resolves cruciform DNA. The chain is Holliday junction branch migration complex subunit RuvB from Streptococcus agalactiae serotype V (strain ATCC BAA-611 / 2603 V/R).